Consider the following 356-residue polypeptide: uncharacterized protein (356 aa).

This is an uncharacterized protein from Saccharolobus islandicus (Sulfolobus islandicus).